Here is an 81-residue protein sequence, read N- to C-terminus: Putative defensin-like protein 31 (81 aa).

The first 26 residues, 1 to 26 (MTSSSKCLFFVFLCLAALLTPYLAEA), serve as a signal peptide directing secretion. 3 disulfide bridges follow: cysteine 38-cysteine 58, cysteine 44-cysteine 70, and cysteine 48-cysteine 72.

The protein belongs to the DEFL family.

It localises to the secreted. In Arabidopsis thaliana (Mouse-ear cress), this protein is Putative defensin-like protein 31.